Here is a 60-residue protein sequence, read N- to C-terminus: Small integral membrane protein 3 (60 aa).

Residues 20–40 traverse the membrane as a helical segment; that stretch reads IWVIVLIILATIVIMTSLLLC.

Its subcellular location is the membrane. This is Small integral membrane protein 3 (SMIM3) from Homo sapiens (Human).